The sequence spans 176 residues: Small ribosomal subunit protein uS5 (176 aa).

Residues Leu-11–Val-74 enclose the S5 DRBM domain.

It belongs to the universal ribosomal protein uS5 family. In terms of assembly, part of the 30S ribosomal subunit. Contacts proteins S4 and S8.

In terms of biological role, with S4 and S12 plays an important role in translational accuracy. Located at the back of the 30S subunit body where it stabilizes the conformation of the head with respect to the body. The protein is Small ribosomal subunit protein uS5 of Rickettsia rickettsii (strain Iowa).